The following is a 96-amino-acid chain: NADH-ubiquinone oxidoreductase chain 4L (96 aa).

Transmembrane regions (helical) follow at residues 1–21, 27–47, and 61–81; these read MELM…ALSL, MLAL…LVMF, and IILL…VVAI.

This sequence belongs to the complex I subunit 4L family.

The protein resides in the mitochondrion membrane. The enzyme catalyses a ubiquinone + NADH + 5 H(+)(in) = a ubiquinol + NAD(+) + 4 H(+)(out). In terms of biological role, core subunit of the mitochondrial membrane respiratory chain NADH dehydrogenase (Complex I) which catalyzes electron transfer from NADH through the respiratory chain, using ubiquinone as an electron acceptor. Part of the enzyme membrane arm which is embedded in the lipid bilayer and involved in proton translocation. This chain is NADH-ubiquinone oxidoreductase chain 4L (MT-ND4L), found in Lycodon semicarinatus (Ryukyu odd-tooth snake).